We begin with the raw amino-acid sequence, 342 residues long: Phosphate acyltransferase (342 aa).

The protein belongs to the PlsX family. As to quaternary structure, homodimer. Probably interacts with PlsY.

It localises to the cytoplasm. The enzyme catalyses a fatty acyl-[ACP] + phosphate = an acyl phosphate + holo-[ACP]. It functions in the pathway lipid metabolism; phospholipid metabolism. Functionally, catalyzes the reversible formation of acyl-phosphate (acyl-PO(4)) from acyl-[acyl-carrier-protein] (acyl-ACP). This enzyme utilizes acyl-ACP as fatty acyl donor, but not acyl-CoA. This is Phosphate acyltransferase from Shewanella baltica (strain OS155 / ATCC BAA-1091).